A 251-amino-acid chain; its full sequence is Glucosamine-6-phosphate deaminase (251 aa).

The Proton acceptor; for enolization step role is filled by Asp-73. Asn-142 (for ring-opening step) is an active-site residue. His-144 (proton acceptor; for ring-opening step) is an active-site residue. Glu-149 serves as the catalytic For ring-opening step.

Belongs to the glucosamine/galactosamine-6-phosphate isomerase family. NagB subfamily.

The enzyme catalyses alpha-D-glucosamine 6-phosphate + H2O = beta-D-fructose 6-phosphate + NH4(+). Its pathway is amino-sugar metabolism; N-acetylneuraminate degradation; D-fructose 6-phosphate from N-acetylneuraminate: step 5/5. Its function is as follows. Catalyzes the reversible isomerization-deamination of glucosamine 6-phosphate (GlcN6P) to form fructose 6-phosphate (Fru6P) and ammonium ion. This is Glucosamine-6-phosphate deaminase from Rhodopirellula baltica (strain DSM 10527 / NCIMB 13988 / SH1).